Consider the following 294-residue polypeptide: N-acetylmuramic acid 6-phosphate etherase (294 aa).

Residues 56–219 (TSYSLKNGGR…STLSMVSVGK (164 aa)) enclose the SIS domain. The active-site Proton donor is the Glu-84. Glu-115 is a catalytic residue.

This sequence belongs to the GCKR-like family. MurNAc-6-P etherase subfamily. In terms of assembly, homodimer.

The catalysed reaction is N-acetyl-D-muramate 6-phosphate + H2O = N-acetyl-D-glucosamine 6-phosphate + (R)-lactate. The protein operates within amino-sugar metabolism; 1,6-anhydro-N-acetylmuramate degradation. It functions in the pathway amino-sugar metabolism; N-acetylmuramate degradation. It participates in cell wall biogenesis; peptidoglycan recycling. In terms of biological role, specifically catalyzes the cleavage of the D-lactyl ether substituent of MurNAc 6-phosphate, producing GlcNAc 6-phosphate and D-lactate. Together with AnmK, is also required for the utilization of anhydro-N-acetylmuramic acid (anhMurNAc) either imported from the medium or derived from its own cell wall murein, and thus plays a role in cell wall recycling. This chain is N-acetylmuramic acid 6-phosphate etherase, found in Francisella tularensis subsp. novicida (strain U112).